The sequence spans 611 residues: Probable potassium transport system protein Kup (611 aa).

The next 13 membrane-spanning stretches (helical) occupy residues 24–44, 55–75, 102–122, 143–163, 175–195, 218–238, 252–272, 275–295, 296–316, 344–364, 374–394, 400–420, and 423–443; these read LVFG…FLFL, VSLI…FLAM, VAVF…ECVI, LIAQ…LFLF, FGPV…ISVA, LLGF…EALF, AWGF…AYLL, TDVI…LYIP, FLLL…SGIF, IYIN…LLIF, YGLA…AIFL, LYMG…LSTV, and ITHG…IVII.

The protein belongs to the HAK/KUP transporter (TC 2.A.72) family.

Its subcellular location is the cell membrane. The enzyme catalyses K(+)(in) + H(+)(in) = K(+)(out) + H(+)(out). In terms of biological role, transport of potassium into the cell. Likely operates as a K(+):H(+) symporter. The sequence is that of Probable potassium transport system protein Kup from Methanospirillum hungatei JF-1 (strain ATCC 27890 / DSM 864 / NBRC 100397 / JF-1).